The primary structure comprises 1091 residues: LRR receptor-like serine/threonine-protein kinase RGI3 (1091 aa).

The first 24 residues, 1–24, serve as a signal peptide directing secretion; the sequence is MPPNIYRLSFFSSLLCFFFIPCFS. The Extracellular portion of the chain corresponds to 25 to 703; the sequence is LDQQGQALLS…TTRNSSVVRL (679 aa). An LRR 1 repeat occupies 33–56; sequence LSWKSQLNISGDAFSSWHVADTSP. Residue Asn40 is glycosylated (N-linked (GlcNAc...) asparagine). Residues Cys57 and Cys64 are joined by a disulfide bond. LRR repeat units follow at residues 67 to 91, 92 to 115, 116 to 140, 142 to 166, 168 to 188, 190 to 213, 214 to 237, 239 to 261, 262 to 285, 287 to 309, 311 to 332, 333 to 357, 359 to 383, 385 to 405, 406 to 429, 431 to 453, 454 to 477, 478 to 501, 503 to 524, 525 to 548, 549 to 572, 574 to 596, 598 to 620, 621 to 644, 645 to 668, and 669 to 690; these read RGEV…SLRS, LKSL…EIGD, FTEL…IFRL, KLKT…NLSG, VELM…IGEL, NLQV…IGNC, ENLV…IGNL, RVQT…IGYC, TELQ…IGGL, KLQS…LGNC, ELWL…SFGK, LENL…LTNC, KLTH…NLRS, TMFF…LSQC, RELQ…IFGL, NLTK…IGNC, TNLY…IGNL, KNLN…ISGC, SLEF…TTLP, KSLK…IGLL, TELT…ISTC, SLQL…LGQI, SLAI…RFSD, LKNL…LTDL, QNLV…PFFR, and RLPL…ISTR. N-linked (GlcNAc...) asparagine glycosylation occurs at Asn104. An N-linked (GlcNAc...) asparagine glycan is attached at Asn163. Short sequence motifs (small peptide recognition) lie at residues 173–174, 195–198, 218–223, Tyr246, and 268–270; these read FD, RAGG, MLGLAE, and YLY. 2 consecutive short sequence motifs (small peptide recognition) follow at residues 316-319 and 338-340; these read DFSE and ELQ. An N-linked (GlcNAc...) asparagine glycan is attached at Asn356. 2 short sequence motifs (small peptide recognition) span residues 386–390 and 412–415; these read MFFAW and DLSY. N-linked (GlcNAc...) asparagine glycosylation occurs at Asn431. The Small peptide recognition signature appears at 434-438; the sequence is KLLLL. N-linked (GlcNAc...) asparagine glycosylation occurs at Asn452. Residues 458–460 carry the Small peptide recognition motif; sequence RLR. N-linked (GlcNAc...) asparagine glycosylation is present at Asn604. The N-linked (GlcNAc...) asparagine glycan is linked to Asn651. N-linked (GlcNAc...) asparagine glycosylation is present at Asn697. Residues 704–724 traverse the membrane as a helical segment; it reads TILILVVVTAVLVLMAVYTLV. Over 725 to 1091 the chain is Cytoplasmic; that stretch reads RARAAGKQLL…CSFAFSDDSV (367 aa). The region spanning 760-1046 is the Protein kinase domain; the sequence is LTSANVIGTG…MLTEIRHIDV (287 aa). Residues 766–774 and Lys788 each bind ATP; that span reads IGTGSSGVV. 2 positions are modified to phosphotyrosine: Tyr831 and Tyr870. Asp883 functions as the Proton acceptor in the catalytic mechanism. Residue Tyr933 is modified to Phosphotyrosine.

It belongs to the protein kinase superfamily. Ser/Thr protein kinase family. As to quaternary structure, binds to RGF peptides such as RGF1, GLV5/CLEL1/RGF2, GLV7/CLEL3/RGF3, GLV3/RGF4, GLV10/CLEL7/RGF5 and RGF10/CLELN; these interactions trigger the formation of heterodimers with SERK1, SERK2 or BAK1/SERK3 via LRR regions. Post-translationally, phosphorylated and ubiquitinated upon interaction with RGF1, thus leading to activation a subsequent degradation. In terms of processing, autophosphorylated. Expressed in roots.

Its subcellular location is the cell membrane. The catalysed reaction is L-seryl-[protein] + ATP = O-phospho-L-seryl-[protein] + ADP + H(+). It carries out the reaction L-threonyl-[protein] + ATP = O-phospho-L-threonyl-[protein] + ADP + H(+). Functionally, together with RGI1, RGI2, RGI4 and RGI5, acts as a receptor of RGF peptides (e.g. RGF1, GLV5/CLEL1/RGF2, GLV7/CLEL3/RGF3, GLV3/RGF4, GLV10/CLEL7/RGF5 and RGF10/CLELN), peptide hormones which maintain the postembryonic root stem cell niche by regulating the expression levels and patterns of the transcription factor PLETHORA (PLT, e.g. PLT1 and PLT2). Links RGF peptides signal with their downstream components. This is LRR receptor-like serine/threonine-protein kinase RGI3 from Arabidopsis thaliana (Mouse-ear cress).